The following is a 279-amino-acid chain: MAIRKYKPTTPGRRGSSVADFAEITRSTPEKSLLTPLPKKGGRNAHGRITARHQGGGHKRQYRIIDFKRVDKDGVPAKVAHIEYDPNRTARIALLHFLDGEKRYILAPKDLKQGDIVESGPGADIKPGNNLPLRNIPVGMTIHNVELRPGGGAKLARSAGTGIQLLGREGAYATLRMPSGEIRRVDVRCRASIGEIGNADQSNINWGKAGRMRWKGKRPTVRGVAMNPVDHPHGGGEGKTSGGRHPVNPQGKPEGRTRRKGQPSDRLIVRRRYATRKRG.

Disordered regions lie at residues 32–58 (SLLT…GGGH) and 223–279 (GVAM…RKRG). 2 stretches are compositionally biased toward basic residues: residues 40 to 58 (KGGR…GGGH) and 269 to 279 (VRRRYATRKRG).

This sequence belongs to the universal ribosomal protein uL2 family. In terms of assembly, part of the 50S ribosomal subunit. Forms a bridge to the 30S subunit in the 70S ribosome.

One of the primary rRNA binding proteins. Required for association of the 30S and 50S subunits to form the 70S ribosome, for tRNA binding and peptide bond formation. It has been suggested to have peptidyltransferase activity; this is somewhat controversial. Makes several contacts with the 16S rRNA in the 70S ribosome. This chain is Large ribosomal subunit protein uL2, found in Salinispora tropica (strain ATCC BAA-916 / DSM 44818 / JCM 13857 / NBRC 105044 / CNB-440).